We begin with the raw amino-acid sequence, 248 residues long: MKILLTNDDGVHSPGLAALIKKVSEVAEVVVVAPDREQSAVSHALTLHHPLRAARIGANVFSVEGTPTDCVNLGIHSLLSYRPDLVISGVNRGANIADDVTYSGTVAAALEATLMGIPAIAVSLVTRSAGEHFEAAAACAAKLAVTVHQKGLPRDTYLNVNVPDLPAESLLPPLITCQGKRSYEGTIVDKVDPRGRNYYWIGTTDLSFEDIPGTDYHAVSRGHVSISPLHIDLTNHASIEMLKSWELP.

4 residues coordinate a divalent metal cation: aspartate 8, aspartate 9, serine 39, and asparagine 91.

Belongs to the SurE nucleotidase family. A divalent metal cation serves as cofactor.

It is found in the cytoplasm. The enzyme catalyses a ribonucleoside 5'-phosphate + H2O = a ribonucleoside + phosphate. Nucleotidase that shows phosphatase activity on nucleoside 5'-monophosphates. The chain is 5'-nucleotidase SurE from Citrifermentans bemidjiense (strain ATCC BAA-1014 / DSM 16622 / JCM 12645 / Bem) (Geobacter bemidjiensis).